The sequence spans 1045 residues: Extracellular serine protease (1045 aa).

A signal peptide spans 1 to 27 (MILNKRLKLAYCVFLGCYGLSIHSSLA). One can recognise a Peptidase S8 domain in the interval 49 to 397 (QWGLEAISAE…WGRVNLRDAI (349 aa)). Residues D76, H112, and S341 each act as charge relay system in the active site. The propeptide at 646-1045 (SLASTENEKA…SVNAGLTWRF (400 aa)) is translocator domain; removed in mature form. Positions 769–1045 (IKADDNGAWA…SVNAGLTWRF (277 aa)) constitute an Autotransporter domain.

The protein belongs to the peptidase S8 family.

It is found in the secreted. This chain is Extracellular serine protease, found in Serratia marcescens.